The chain runs to 574 residues: UvrABC system protein C (574 aa).

The GIY-YIG domain occupies 12-92; the sequence is KKPGVYIFKN…IYIHKPKYNI (81 aa). In terms of domain architecture, UVR spans 200-235; it reads EEVKNYLQKAMMDYAKIKNYEKAAQMRDTLFKLENL.

This sequence belongs to the UvrC family. Interacts with UvrB in an incision complex.

It is found in the cytoplasm. The UvrABC repair system catalyzes the recognition and processing of DNA lesions. UvrC both incises the 5' and 3' sides of the lesion. The N-terminal half is responsible for the 3' incision and the C-terminal half is responsible for the 5' incision. The polypeptide is UvrABC system protein C (Petrotoga mobilis (strain DSM 10674 / SJ95)).